A 79-amino-acid polypeptide reads, in one-letter code: D-alanyl carrier protein (79 aa).

The Carrier domain occupies 1 to 77; that stretch reads MDIKSEVLKI…KIIEGITELR (77 aa). Serine 35 is subject to O-(pantetheine 4'-phosphoryl)serine.

It belongs to the DltC family. 4'-phosphopantetheine is transferred from CoA to a specific serine of apo-DCP.

It localises to the cytoplasm. Its pathway is cell wall biogenesis; lipoteichoic acid biosynthesis. In terms of biological role, carrier protein involved in the D-alanylation of lipoteichoic acid (LTA). The loading of thioester-linked D-alanine onto DltC is catalyzed by D-alanine--D-alanyl carrier protein ligase DltA. The DltC-carried D-alanyl group is further transferred to cell membrane phosphatidylglycerol (PG) by forming an ester bond, probably catalyzed by DltD. D-alanylation of LTA plays an important role in modulating the properties of the cell wall in Gram-positive bacteria, influencing the net charge of the cell wall. The polypeptide is D-alanyl carrier protein (Streptococcus mutans serotype c (strain ATCC 700610 / UA159)).